Here is a 173-residue protein sequence, read N- to C-terminus: Putative metal-dependent hydrolase BCE_2729 (173 aa).

His65, His156, and His160 together coordinate Zn(2+).

Belongs to the metal hydrolase YfiT family. As to quaternary structure, homodimer. Zn(2+) is required as a cofactor.

The protein resides in the cytoplasm. Functionally, possible metal-dependent hydrolase. This chain is Putative metal-dependent hydrolase BCE_2729, found in Bacillus cereus (strain ATCC 10987 / NRS 248).